A 147-amino-acid chain; its full sequence is Phosphoribosyl-AMP cyclohydrolase (147 aa).

Position 91 (Asp-91) interacts with Mg(2+). Cys-92 contacts Zn(2+). Residues Asp-93 and Asp-95 each coordinate Mg(2+). Cys-109 and Cys-116 together coordinate Zn(2+).

This sequence belongs to the PRA-CH family. As to quaternary structure, homodimer. The cofactor is Mg(2+). Zn(2+) is required as a cofactor.

It localises to the cytoplasm. The catalysed reaction is 1-(5-phospho-beta-D-ribosyl)-5'-AMP + H2O = 1-(5-phospho-beta-D-ribosyl)-5-[(5-phospho-beta-D-ribosylamino)methylideneamino]imidazole-4-carboxamide. It functions in the pathway amino-acid biosynthesis; L-histidine biosynthesis; L-histidine from 5-phospho-alpha-D-ribose 1-diphosphate: step 3/9. Catalyzes the hydrolysis of the adenine ring of phosphoribosyl-AMP. The protein is Phosphoribosyl-AMP cyclohydrolase of Rhodopseudomonas palustris (strain BisB18).